We begin with the raw amino-acid sequence, 370 residues long: Proline-rich protein 5-like (370 aa).

Ser-28 bears the Phosphoserine mark. Disordered stretches follow at residues 312-346 (LGEE…LDSP) and 351-370 (LEDV…ASLS).

Belongs to the PROTOR family. Interacts with the mammalian target of rapamycin complex 2 (mTORC2) which contains MTOR, MLST8, PRR5, RICTOR, MAPKAP1 and DEPTOR. Interacts with RFFL. Interacts (via C-terminus) with ZFP36 (via C-terminus); this interaction may accelerate ZFP36-mediated mRNA decay during stress. Interacts with RICTOR. In terms of processing, ubiquitinated. Ubiquitination by RFFL promotes proteasomal degradation of PRR5L thereby modifying the substrate-specific activity of the mTORC2 complex. Ubiquitination by RFFL is stimulated by LPA/lysophosphatidic acid.

In terms of biological role, associates with the mTORC2 complex that regulates cellular processes including survival and organization of the cytoskeleton. Regulates the activity of the mTORC2 complex in a substrate-specific manner preventing for instance the specific phosphorylation of PKCs and thereby controlling cell migration. Plays a role in the stimulation of ZFP36-mediated mRNA decay of several ZFP36-associated mRNAs, such as TNF-alpha and GM-CSF, in response to stress. Required for ZFP36 localization to cytoplasmic stress granule (SG) and P-body (PB) in response to stress. This Mus musculus (Mouse) protein is Proline-rich protein 5-like (Prr5l).